The primary structure comprises 447 residues: Elongation factor 1-alpha (447 aa).

Residues 5 to 230 (KIHISIVVIG…DQINEPKRPS (226 aa)) enclose the tr-type G domain. The tract at residues 14–21 (GHVDSGKS) is G1. 14-21 (GHVDSGKS) is a GTP binding site. Residue Lys55 is modified to N6,N6-dimethyllysine. The interval 70–74 (GITID) is G2. An N6,N6,N6-trimethyllysine modification is found at Lys79. Residues 91 to 94 (DAPG) are G3. Residues 91–95 (DAPGH) and 153–156 (NKMD) each bind GTP. The interval 153–156 (NKMD) is G4. N6,N6,N6-trimethyllysine is present on Lys187. A G5 region spans residues 194-196 (SGF). Lys261 is modified (N6-methyllysine). At Glu289 the chain carries 5-glutamyl glycerylphosphorylethanolamine. Lys306 carries the post-translational modification N6,N6,N6-trimethyllysine. Glu362 is subject to 5-glutamyl glycerylphosphorylethanolamine. An N6,N6,N6-trimethyllysine modification is found at Lys396.

The protein belongs to the TRAFAC class translation factor GTPase superfamily. Classic translation factor GTPase family. EF-Tu/EF-1A subfamily.

It is found in the cytoplasm. This protein promotes the GTP-dependent binding of aminoacyl-tRNA to the A-site of ribosomes during protein biosynthesis. The protein is Elongation factor 1-alpha of Hordeum vulgare (Barley).